The following is a 433-amino-acid chain: MYKTQMEAAKKGILTKEMKSIAESESIDEKVLMERVASGEITIPANKKHSSLLAKGVGTGLSTKINVNLGISKDCPNVDKELEKVKVAIDMKVDAIMDLSSFGKTEEFRKKLITMSTAMVGTVPVYDAIGFYDKELKDIKAEEFLDVVRKHAEDGVDFVTIHAGLNREAVNLFKRNERITNIVSRGGSLMYAWMELNNAENPFYENFDKLLDICEEYDMTISLGDALRPGCLNDATDACQIKELITLGELTKRAWERNVQIIIEGPGHMAIDEIEANVKLEKKLCHNAPFYVLGPLVTDIAPGYDHITSAIGGAIAAAAGVDFLCYVTPAEHLRLPDLDDMKEGIIASRIAAHAADISKKVPKAIDWDNRMAKYRTDIDWEGMFTEAIDEEKARRYRKESTPENEDTCTMCGKMCSMRTMKKMMSGEDVNILK.

Residues N68, M97, Y126, H162, 184 to 186 (SRG), 225 to 228 (DALR), and E264 contribute to the substrate site. H268 is a Zn(2+) binding site. Y291 contributes to the substrate binding site. Zn(2+) is bound at residue H332. Residues C408, C411, and C415 each coordinate [4Fe-4S] cluster.

It belongs to the ThiC family. The cofactor is [4Fe-4S] cluster.

The enzyme catalyses 5-amino-1-(5-phospho-beta-D-ribosyl)imidazole + S-adenosyl-L-methionine = 4-amino-2-methyl-5-(phosphooxymethyl)pyrimidine + CO + 5'-deoxyadenosine + formate + L-methionine + 3 H(+). It functions in the pathway cofactor biosynthesis; thiamine diphosphate biosynthesis. In terms of biological role, catalyzes the synthesis of the hydroxymethylpyrimidine phosphate (HMP-P) moiety of thiamine from aminoimidazole ribotide (AIR) in a radical S-adenosyl-L-methionine (SAM)-dependent reaction. This is Phosphomethylpyrimidine synthase from Fusobacterium nucleatum subsp. nucleatum (strain ATCC 25586 / DSM 15643 / BCRC 10681 / CIP 101130 / JCM 8532 / KCTC 2640 / LMG 13131 / VPI 4355).